The chain runs to 446 residues: Histidine--tRNA ligase (446 aa).

Belongs to the class-II aminoacyl-tRNA synthetase family. In terms of assembly, homodimer.

It is found in the cytoplasm. It carries out the reaction tRNA(His) + L-histidine + ATP = L-histidyl-tRNA(His) + AMP + diphosphate + H(+). This chain is Histidine--tRNA ligase, found in Burkholderia pseudomallei (strain 668).